A 255-amino-acid chain; its full sequence is NAD kinase (255 aa).

The active-site Proton acceptor is D44. NAD(+) contacts are provided by residues 44–45 (DG), H49, 114–115 (NE), D144, A152, 155–160 (SAYNLS), and Q216.

It belongs to the NAD kinase family. A divalent metal cation serves as cofactor.

The protein localises to the cytoplasm. It carries out the reaction NAD(+) + ATP = ADP + NADP(+) + H(+). Involved in the regulation of the intracellular balance of NAD and NADP, and is a key enzyme in the biosynthesis of NADP. Catalyzes specifically the phosphorylation on 2'-hydroxyl of the adenosine moiety of NAD to yield NADP. The polypeptide is NAD kinase (Rickettsia bellii (strain OSU 85-389)).